The primary structure comprises 328 residues: Gonadotropin-releasing hormone receptor (328 aa).

Topologically, residues 1–38 (MANSDSPEQNENHCSSINSSIPLTPGSLPTLTLSGKIR) are extracellular. N18 is a glycosylation site (N-linked (GlcNAc...) asparagine). A helical transmembrane segment spans residues 39 to 58 (VTVTFFLFLLSTIFNTSFLL). The Cytoplasmic portion of the chain corresponds to 59-77 (KLQNWTQRKEKRKKLSRMK). The chain crosses the membrane as a helical span at residues 78-97 (LLLKHLTLANLLETLIVMPL). The Extracellular portion of the chain corresponds to 98–115 (DGMWNITVQWYAGELLCK). N102 carries N-linked (GlcNAc...) asparagine glycosylation. The cysteines at positions 114 and 196 are disulfide-linked. The helical transmembrane segment at 116-137 (VLSYLKLFSMYAPAFMMVVISL) threads the bilayer. The Cytoplasmic segment spans residues 138–164 (DRSLAITKPLAVKSNSKLGQFMIGLAW). A helical transmembrane segment spans residues 165 to 184 (LLSSIFAGPQLYIFGMIHLA). The Extracellular segment spans residues 185 to 212 (DDSGQTEGFSQCVTHCSFPQWWHQAFYN). Residues 213–232 (FFTFSCLFIIPLLIMVICNA) traverse the membrane as a helical segment. The Cytoplasmic segment spans residues 233–281 (KIIFTLTRVLHQDPHKLQLNQSKNNIPRARLRTLKMTVAFATSFTVCWT). A helical membrane pass occupies residues 282-300 (PYYVLGIWYWFDPDMVNRV). Residues 301–306 (SDPVNH) are Extracellular-facing. A helical membrane pass occupies residues 307 to 326 (FFFLFAFLNPCFNPLIYGYF). The Cytoplasmic segment spans residues 327–328 (SL).

This sequence belongs to the G-protein coupled receptor 1 family.

Its subcellular location is the cell membrane. Receptor for gonadotropin releasing hormone (GnRH) that mediates the action of GnRH to stimulate the secretion of the gonadotropic hormones luteinizing hormone (LH) and follicle-stimulating hormone (FSH). This receptor mediates its action by association with G-proteins that activate a phosphatidylinositol-calcium second messenger system. The sequence is that of Gonadotropin-releasing hormone receptor (GNRHR) from Bos mutus grunniens (Wild yak).